A 130-amino-acid polypeptide reads, in one-letter code: Histone H2A (130 aa).

An N6-acetyllysine mark is found at lysine 4 and lysine 7. Residue glutamine 105 is modified to N5-methylglutamine. The residue at position 127 (serine 127) is a Phosphoserine. Residues 127–128 carry the [ST]-Q motif motif; it reads SQ.

This sequence belongs to the histone H2A family. As to quaternary structure, the nucleosome is a histone octamer containing two molecules each of H2A, H2B, H3 and H4 assembled in one H3-H4 heterotetramer and two H2A-H2B heterodimers. The octamer wraps approximately 147 bp of DNA. Phosphorylated to form H2AS128ph (gamma-H2A) in response to DNA double-strand breaks (DSBs) generated by exogenous genotoxic agents and by stalled replication forks. Phosphorylation is dependent on the DNA damage checkpoint kinases MEC1/ATR and TEL1/ATM, spreads on either side of a detected DSB site and may mark the surrounding chromatin for recruitment of proteins required for DNA damage signaling and repair. Gamma-H2A is removed from the DNA prior to the strand invasion-primer extension step of the repair process and subsequently dephosphorylated by PPH3, a component of the histone H2A phosphatase complex (HTP-C). Dephosphorylation is necessary for efficient recovery from the DNA damage checkpoint. Post-translationally, acetylated by ESA1 to form H2AK4ac and H2AK7ac.

The protein localises to the nucleus. It localises to the chromosome. Functionally, core component of nucleosome which plays a central role in DNA double strand break (DSB) repair. Nucleosomes wrap and compact DNA into chromatin, limiting DNA accessibility to the cellular machineries which require DNA as a template. Histones thereby play a central role in transcription regulation, DNA repair, DNA replication and chromosomal stability. DNA accessibility is regulated via a complex set of post-translational modifications of histones, also called histone code, and nucleosome remodeling. In Kluyveromyces lactis (strain ATCC 8585 / CBS 2359 / DSM 70799 / NBRC 1267 / NRRL Y-1140 / WM37) (Yeast), this protein is Histone H2A (HTA1).